Here is a 729-residue protein sequence, read N- to C-terminus: ATP-dependent DNA helicase Hel308 (729 aa).

ATP-binding positions include Q28 and 46-53 (IPTASGKT). Residues 33–199 (EKGLLEGRNL…WLEAELVVSE (167 aa)) form the Helicase ATP-binding domain. Positions 144–147 (DEVH) match the DEAH box motif. The 195-residue stretch at 232–426 (AVNLALDTLK…SKLGTENALR (195 aa)) folds into the Helicase C-terminal domain. Residues 706 to 729 (SSGIIASEPPEKSPYSGQKTISDY) are disordered. Residues 720 to 729 (YSGQKTISDY) are compositionally biased toward polar residues.

It belongs to the helicase family. Hel308 subfamily. Monomer.

It carries out the reaction Couples ATP hydrolysis with the unwinding of duplex DNA by translocating in the 3'-5' direction.. The enzyme catalyses ATP + H2O = ADP + phosphate + H(+). In terms of biological role, DNA-dependent ATPase and 3'-5' DNA helicase that may be involved in repair of stalled replication forks. The polypeptide is ATP-dependent DNA helicase Hel308 (Methanosarcina barkeri (strain Fusaro / DSM 804)).